A 383-amino-acid chain; its full sequence is S-adenosylmethionine synthase (383 aa).

An ATP-binding site is contributed by His-22. Residue Asp-24 coordinates Mg(2+). Glu-50 lines the K(+) pocket. Positions 63 and 99 each coordinate L-methionine. The segment at 99–109 is flexible loop; that stretch reads QSSEINQAVQS. ATP is bound by residues 160 to 162, Asp-235, 241 to 242, Ser-258, and Lys-262; these read DMK and RK. Asp-235 serves as a coordination point for L-methionine. Lys-266 provides a ligand contact to L-methionine.

Belongs to the AdoMet synthase family. In terms of assembly, homotetramer; dimer of dimers. Mg(2+) is required as a cofactor. K(+) serves as cofactor.

Its subcellular location is the cytoplasm. It carries out the reaction L-methionine + ATP + H2O = S-adenosyl-L-methionine + phosphate + diphosphate. Its pathway is amino-acid biosynthesis; S-adenosyl-L-methionine biosynthesis; S-adenosyl-L-methionine from L-methionine: step 1/1. Functionally, catalyzes the formation of S-adenosylmethionine (AdoMet) from methionine and ATP. The overall synthetic reaction is composed of two sequential steps, AdoMet formation and the subsequent tripolyphosphate hydrolysis which occurs prior to release of AdoMet from the enzyme. In Mycoplasma pneumoniae (strain ATCC 29342 / M129 / Subtype 1) (Mycoplasmoides pneumoniae), this protein is S-adenosylmethionine synthase.